A 221-amino-acid polypeptide reads, in one-letter code: Mediator of RNA polymerase II transcription subunit 19a (221 aa).

The disordered stretch occupies residues 101–221 (PVELPPAEKG…DEVGAIRVAG (121 aa)). Residues 142 to 152 (EHKKHKHKHKD) show a composition bias toward basic residues. The span at 153–178 (RSKDKDKDKDRDRKKDKNGHHDSGDH) shows a compositional bias: basic and acidic residues. Positions 179-188 (SKKHHDKKRK) are enriched in basic residues.

Belongs to the plant Mediator complex subunit 19 family. As to quaternary structure, component of the Mediator complex. Interacts with FIB2.

The protein resides in the nucleus. In terms of biological role, component of the Mediator complex, a coactivator involved in the regulated transcription of nearly all RNA polymerase II-dependent genes. Mediator functions as a bridge to convey information from gene-specific regulatory proteins to the basal RNA polymerase II transcription machinery. The Mediator complex, having a compact conformation in its free form, is recruited to promoters by direct interactions with regulatory proteins and serves for the assembly of a functional preinitiation complex with RNA polymerase II and the general transcription factors. This Arabidopsis thaliana (Mouse-ear cress) protein is Mediator of RNA polymerase II transcription subunit 19a (MED19A).